Here is a 226-residue protein sequence, read N- to C-terminus: Putative 5'-nucleotidase alr3139 (226 aa).

4 residues coordinate a divalent metal cation: Asp-8, Asp-9, Ser-38, and Asn-89.

This sequence belongs to the SurE nucleotidase family. It depends on a divalent metal cation as a cofactor.

Its subcellular location is the cytoplasm. The enzyme catalyses a ribonucleoside 5'-phosphate + H2O = a ribonucleoside + phosphate. Nucleotidase that shows phosphatase activity on nucleoside 5'-monophosphates. The sequence is that of Putative 5'-nucleotidase alr3139 from Nostoc sp. (strain PCC 7120 / SAG 25.82 / UTEX 2576).